Reading from the N-terminus, the 115-residue chain is Meiotically up-regulated gene 168 protein (115 aa).

Residues 82–115 (SVSPVHTKAEEPGLGLTPMNSADFSNKIASRYRS) form a disordered region. Residues 99-109 (PMNSADFSNKI) show a composition bias toward polar residues.

It localises to the nucleus. Functionally, has a role in meiosis. This is Meiotically up-regulated gene 168 protein (mug168) from Schizosaccharomyces pombe (strain 972 / ATCC 24843) (Fission yeast).